Consider the following 320-residue polypeptide: Lipoyl synthase (320 aa).

Residues 1–28 (MVTVVDRVTDRRLRHPEKAHRPDTSVQK) are disordered. Residues 19-28 (AHRPDTSVQK) are compositionally biased toward basic and acidic residues. [4Fe-4S] cluster contacts are provided by C59, C64, C70, C85, C89, C92, and S298. Positions 71-287 (WSQRHASFMI…AKIGKVKGFL (217 aa)) constitute a Radical SAM core domain.

The protein belongs to the radical SAM superfamily. Lipoyl synthase family. Requires [4Fe-4S] cluster as cofactor.

It is found in the cytoplasm. It catalyses the reaction [[Fe-S] cluster scaffold protein carrying a second [4Fe-4S](2+) cluster] + N(6)-octanoyl-L-lysyl-[protein] + 2 oxidized [2Fe-2S]-[ferredoxin] + 2 S-adenosyl-L-methionine + 4 H(+) = [[Fe-S] cluster scaffold protein] + N(6)-[(R)-dihydrolipoyl]-L-lysyl-[protein] + 4 Fe(3+) + 2 hydrogen sulfide + 2 5'-deoxyadenosine + 2 L-methionine + 2 reduced [2Fe-2S]-[ferredoxin]. It functions in the pathway protein modification; protein lipoylation via endogenous pathway; protein N(6)-(lipoyl)lysine from octanoyl-[acyl-carrier-protein]: step 2/2. In terms of biological role, catalyzes the radical-mediated insertion of two sulfur atoms into the C-6 and C-8 positions of the octanoyl moiety bound to the lipoyl domains of lipoate-dependent enzymes, thereby converting the octanoylated domains into lipoylated derivatives. The chain is Lipoyl synthase from Bartonella henselae (strain ATCC 49882 / DSM 28221 / CCUG 30454 / Houston 1) (Rochalimaea henselae).